The chain runs to 240 residues: 6-phosphogluconolactonase (240 aa).

The protein belongs to the glucosamine/galactosamine-6-phosphate isomerase family. 6-phosphogluconolactonase subfamily.

The catalysed reaction is 6-phospho-D-glucono-1,5-lactone + H2O = 6-phospho-D-gluconate + H(+). It participates in carbohydrate degradation; pentose phosphate pathway; D-ribulose 5-phosphate from D-glucose 6-phosphate (oxidative stage): step 2/3. In terms of biological role, hydrolysis of 6-phosphogluconolactone to 6-phosphogluconate. The polypeptide is 6-phosphogluconolactonase (pgl) (Nostoc sp. (strain PCC 7120 / SAG 25.82 / UTEX 2576)).